Here is a 202-residue protein sequence, read N- to C-terminus: uncharacterized protein (202 aa).

The interval 118–202 is disordered; the sequence is SSVSPVSSKK…KVSGTKKVKA (85 aa). Serine 121 bears the Phosphoserine mark. Basic residues-rich tracts occupy residues 142–163 and 186–202; these read EKSK…KSKR and SSKS…KVKA.

It is found in the nucleus. The protein resides in the nucleolus. This is an uncharacterized protein from Schizosaccharomyces pombe (strain 972 / ATCC 24843) (Fission yeast).